The primary structure comprises 295 residues: Fructose-bisphosphate aldolase class 1 (295 aa).

Residue glutamate 176 is the Proton acceptor of the active site. The active-site Schiff-base intermediate with dihydroxyacetone-P is the lysine 213.

The protein belongs to the class I fructose-bisphosphate aldolase family.

The enzyme catalyses beta-D-fructose 1,6-bisphosphate = D-glyceraldehyde 3-phosphate + dihydroxyacetone phosphate. It participates in carbohydrate degradation; glycolysis; D-glyceraldehyde 3-phosphate and glycerone phosphate from D-glucose: step 4/4. The chain is Fructose-bisphosphate aldolase class 1 from Fusobacterium nucleatum subsp. nucleatum (strain ATCC 25586 / DSM 15643 / BCRC 10681 / CIP 101130 / JCM 8532 / KCTC 2640 / LMG 13131 / VPI 4355).